The chain runs to 123 residues: Large ribosomal subunit protein bL12 (123 aa).

It belongs to the bacterial ribosomal protein bL12 family. In terms of assembly, homodimer. Part of the ribosomal stalk of the 50S ribosomal subunit. Forms a multimeric L10(L12)X complex, where L10 forms an elongated spine to which 2 to 4 L12 dimers bind in a sequential fashion. Binds GTP-bound translation factors.

In terms of biological role, forms part of the ribosomal stalk which helps the ribosome interact with GTP-bound translation factors. Is thus essential for accurate translation. The polypeptide is Large ribosomal subunit protein bL12 (Shewanella amazonensis (strain ATCC BAA-1098 / SB2B)).